The chain runs to 196 residues: ATP-dependent Clp protease proteolytic subunit (196 aa).

Ser98 serves as the catalytic Nucleophile. His123 is a catalytic residue.

The protein belongs to the peptidase S14 family. Fourteen ClpP subunits assemble into 2 heptameric rings which stack back to back to give a disk-like structure with a central cavity, resembling the structure of eukaryotic proteasomes.

Its subcellular location is the cytoplasm. It catalyses the reaction Hydrolysis of proteins to small peptides in the presence of ATP and magnesium. alpha-casein is the usual test substrate. In the absence of ATP, only oligopeptides shorter than five residues are hydrolyzed (such as succinyl-Leu-Tyr-|-NHMec, and Leu-Tyr-Leu-|-Tyr-Trp, in which cleavage of the -Tyr-|-Leu- and -Tyr-|-Trp bonds also occurs).. Its function is as follows. Cleaves peptides in various proteins in a process that requires ATP hydrolysis. Has a chymotrypsin-like activity. Plays a major role in the degradation of misfolded proteins. The sequence is that of ATP-dependent Clp protease proteolytic subunit from Geobacillus sp. (strain WCH70).